The sequence spans 133 residues: Small ribosomal subunit protein uS11 (133 aa).

This sequence belongs to the universal ribosomal protein uS11 family. Part of the 30S ribosomal subunit. Interacts with proteins S7 and S18. Binds to IF-3.

Functionally, located on the platform of the 30S subunit, it bridges several disparate RNA helices of the 16S rRNA. Forms part of the Shine-Dalgarno cleft in the 70S ribosome. The protein is Small ribosomal subunit protein uS11 of Burkholderia pseudomallei (strain 1106a).